Reading from the N-terminus, the 651-residue chain is Acetyl-coenzyme A synthetase (651 aa).

CoA-binding positions include 190–193, Thr-312, and Asn-336; that span reads RGGK. Residues 388–390, 412–417, Asp-501, and Arg-516 each bind ATP; these read GEP and DTWWQT. Ser-524 provides a ligand contact to CoA. An ATP-binding site is contributed by Arg-527. 3 residues coordinate Mg(2+): Val-538, His-540, and Val-543. Arg-585 serves as a coordination point for CoA. Position 610 is an N6-acetyllysine (Lys-610).

This sequence belongs to the ATP-dependent AMP-binding enzyme family. It depends on Mg(2+) as a cofactor. In terms of processing, acetylated. Deacetylation by the SIR2-homolog deacetylase activates the enzyme.

The enzyme catalyses acetate + ATP + CoA = acetyl-CoA + AMP + diphosphate. Its function is as follows. Catalyzes the conversion of acetate into acetyl-CoA (AcCoA), an essential intermediate at the junction of anabolic and catabolic pathways. AcsA undergoes a two-step reaction. In the first half reaction, AcsA combines acetate with ATP to form acetyl-adenylate (AcAMP) intermediate. In the second half reaction, it can then transfer the acetyl group from AcAMP to the sulfhydryl group of CoA, forming the product AcCoA. This is Acetyl-coenzyme A synthetase from Mesorhizobium japonicum (strain LMG 29417 / CECT 9101 / MAFF 303099) (Mesorhizobium loti (strain MAFF 303099)).